The primary structure comprises 178 residues: ATP synthase subunit b (178 aa).

Residues 19–39 (ITGIGFVILLFIAIKYIVPAF) form a helical membrane-spanning segment.

It belongs to the ATPase B chain family. As to quaternary structure, F-type ATPases have 2 components, F(1) - the catalytic core - and F(0) - the membrane proton channel. F(1) has five subunits: alpha(3), beta(3), gamma(1), delta(1), epsilon(1). F(0) has three main subunits: a(1), b(2) and c(10-14). The alpha and beta chains form an alternating ring which encloses part of the gamma chain. F(1) is attached to F(0) by a central stalk formed by the gamma and epsilon chains, while a peripheral stalk is formed by the delta and b chains.

Its subcellular location is the cell membrane. Functionally, f(1)F(0) ATP synthase produces ATP from ADP in the presence of a proton or sodium gradient. F-type ATPases consist of two structural domains, F(1) containing the extramembraneous catalytic core and F(0) containing the membrane proton channel, linked together by a central stalk and a peripheral stalk. During catalysis, ATP synthesis in the catalytic domain of F(1) is coupled via a rotary mechanism of the central stalk subunits to proton translocation. Its function is as follows. Component of the F(0) channel, it forms part of the peripheral stalk, linking F(1) to F(0). This is ATP synthase subunit b from Kocuria rhizophila (strain ATCC 9341 / DSM 348 / NBRC 103217 / DC2201).